The sequence spans 78 residues: Exodeoxyribonuclease 7 small subunit (78 aa).

It belongs to the XseB family. Heterooligomer composed of large and small subunits.

The protein localises to the cytoplasm. The catalysed reaction is Exonucleolytic cleavage in either 5'- to 3'- or 3'- to 5'-direction to yield nucleoside 5'-phosphates.. Bidirectionally degrades single-stranded DNA into large acid-insoluble oligonucleotides, which are then degraded further into small acid-soluble oligonucleotides. This chain is Exodeoxyribonuclease 7 small subunit, found in Cutibacterium acnes (strain DSM 16379 / KPA171202) (Propionibacterium acnes).